A 147-amino-acid polypeptide reads, in one-letter code: MEKYNREEFEEVIVDIGRVTKVVKGGRRFRFTALVIVGNRKGLVGVGYGKAKEVPDAIRKAVDDAFKNIVEVKTKGSTIAHDVEVKYNASRILLKPASEGTGVIAGGSTRPIVELAGIKDILTKSLGSNNSANVVRATIKALTMLKG.

In terms of domain architecture, S5 DRBM spans 9–72 (FEEVIVDIGR…DDAFKNIVEV (64 aa)).

The protein belongs to the universal ribosomal protein uS5 family. In terms of assembly, part of the 30S ribosomal subunit. Contacts proteins S4 and S8.

Functionally, with S4 and S12 plays an important role in translational accuracy. Its function is as follows. Located at the back of the 30S subunit body where it stabilizes the conformation of the head with respect to the body. The sequence is that of Small ribosomal subunit protein uS5 from Campylobacter jejuni subsp. jejuni serotype O:6 (strain 81116 / NCTC 11828).